Reading from the N-terminus, the 60-residue chain is Small ribosomal subunit protein bS21 (60 aa).

The disordered stretch occupies residues 35 to 60 (REHYEKPSVKRKKKSEAARRRKSKVR). Residues 43-60 (VKRKKKSEAARRRKSKVR) show a composition bias toward basic residues.

It belongs to the bacterial ribosomal protein bS21 family.

In Clostridium novyi (strain NT), this protein is Small ribosomal subunit protein bS21.